Here is a 603-residue protein sequence, read N- to C-terminus: Cell division control protein 48 homolog B (603 aa).

ATP is bound by residues 63–70 and 327–334; these read GPPGTGKT and GPPGCSKT.

This sequence belongs to the AAA ATPase family.

The protein resides in the nucleus. Its subcellular location is the cytoplasm. It is found in the cytoskeleton. The protein localises to the phragmoplast. Its function is as follows. Probably functions in cell division and growth processes. Interacts with certain SNAREs as part of specialized membrane fusion events where vesicles from the same organelle fuse (homotypic fusion). The sequence is that of Cell division control protein 48 homolog B (CDC48B) from Arabidopsis thaliana (Mouse-ear cress).